The following is a 559-amino-acid chain: NAD-dependent histone deacetylase SIR2 (559 aa).

The segment at 1-73 (MSESASMLQG…NDHSAQEVAG (73 aa)) is disordered. The segment covering 39–51 (NDEKELLEATKAD) has biased composition (basic and acidic residues). Residues 52–62 (ELDEVVDDYAE) show a composition bias toward acidic residues. The region spanning 223–514 (RLANFFTLDH…AFIAQKCGWD (292 aa)) is the Deacetylase sirtuin-type domain. Residues 248-267 (GAGI…KGFY) and 330-333 (QNID) each bind NAD(+). H350 functions as the Proton acceptor in the catalytic mechanism. The Zn(2+) site is built by C358, C361, C382, and C385. NAD(+) is bound by residues 458 to 460 (GTS), 483 to 485 (NRD), and C500.

Belongs to the sirtuin family. Class I subfamily. The cofactor is Zn(2+).

The protein localises to the nucleus. The catalysed reaction is N(6)-acetyl-L-lysyl-[protein] + NAD(+) + H2O = 2''-O-acetyl-ADP-D-ribose + nicotinamide + L-lysyl-[protein]. In terms of biological role, NAD-dependent deacetylase. Heterochromatin component that silences transcription at silent mating loci, telomeres and the ribosomal DNA, and that also suppresses recombination in the rDNA and extends replicative life span. It acts as a NAD-dependent histone deacetylase, which deacetylates 'Lys-9' and 'Lys-14' of Histone H3 and 'Lys-16' of Histone H4. The polypeptide is NAD-dependent histone deacetylase SIR2 (SIR2) (Eremothecium gossypii (strain ATCC 10895 / CBS 109.51 / FGSC 9923 / NRRL Y-1056) (Yeast)).